The primary structure comprises 581 residues: Arginine--tRNA ligase (581 aa).

A 'HIGH' region motif is present at residues 131–141 (ANPTGPLHVGH).

It belongs to the class-I aminoacyl-tRNA synthetase family. In terms of assembly, monomer.

Its subcellular location is the cytoplasm. The catalysed reaction is tRNA(Arg) + L-arginine + ATP = L-arginyl-tRNA(Arg) + AMP + diphosphate. This Nitrosospira multiformis (strain ATCC 25196 / NCIMB 11849 / C 71) protein is Arginine--tRNA ligase.